A 223-amino-acid polypeptide reads, in one-letter code: Flagellar L-ring protein 2 (223 aa).

The signal sequence occupies residues 1–17; that stretch reads MKWLSKSWAVAVVLLVG. C18 carries the N-palmitoyl cysteine lipid modification. C18 carries the S-diacylglycerol cysteine lipid modification.

Belongs to the FlgH family. The basal body constitutes a major portion of the flagellar organelle and consists of four rings (L,P,S, and M) mounted on a central rod.

It localises to the cell outer membrane. Its subcellular location is the bacterial flagellum basal body. In terms of biological role, assembles around the rod to form the L-ring and probably protects the motor/basal body from shearing forces during rotation. This Vibrio parahaemolyticus serotype O3:K6 (strain RIMD 2210633) protein is Flagellar L-ring protein 2.